The chain runs to 238 residues: Uridylate kinase (238 aa).

ATP is bound at residue K12–G15. An involved in allosteric activation by GTP region spans residues G20–G25. Residue G54 participates in UMP binding. Residues G55 and R59 each coordinate ATP. Residues D74 and T135–T142 each bind UMP. Residues T162, N163, Y168, and D171 each coordinate ATP.

It belongs to the UMP kinase family. As to quaternary structure, homohexamer.

It is found in the cytoplasm. The catalysed reaction is UMP + ATP = UDP + ADP. It participates in pyrimidine metabolism; CTP biosynthesis via de novo pathway; UDP from UMP (UMPK route): step 1/1. Its activity is regulated as follows. Allosterically activated by GTP. Inhibited by UTP. Catalyzes the reversible phosphorylation of UMP to UDP. The polypeptide is Uridylate kinase (Bradyrhizobium diazoefficiens (strain JCM 10833 / BCRC 13528 / IAM 13628 / NBRC 14792 / USDA 110)).